The chain runs to 325 residues: Holliday junction branch migration complex subunit RuvB (325 aa).

The large ATPase domain (RuvB-L) stretch occupies residues 1–180; sequence MKNQLLDAKV…FGIHLKLNFY (180 aa). ATP is bound by residues Leu-19, Arg-20, Gly-61, Lys-64, Thr-65, Thr-66, 127 to 129, Arg-170, Tyr-180, and Arg-217; that span reads EDF. Residue Thr-65 participates in Mg(2+) binding. The small ATPAse domain (RuvB-S) stretch occupies residues 181 to 251; the sequence is SCEELTKIVE…ITDYALNQLG (71 aa). A head domain (RuvB-H) region spans residues 254–325; the sequence is KLGLDSSDHK…ITANALKHLH (72 aa). DNA contacts are provided by Arg-290, Arg-309, and Arg-314.

Belongs to the RuvB family. As to quaternary structure, homohexamer. Forms an RuvA(8)-RuvB(12)-Holliday junction (HJ) complex. HJ DNA is sandwiched between 2 RuvA tetramers; dsDNA enters through RuvA and exits via RuvB. An RuvB hexamer assembles on each DNA strand where it exits the tetramer. Each RuvB hexamer is contacted by two RuvA subunits (via domain III) on 2 adjacent RuvB subunits; this complex drives branch migration. In the full resolvosome a probable DNA-RuvA(4)-RuvB(12)-RuvC(2) complex forms which resolves the HJ.

The protein resides in the cytoplasm. The enzyme catalyses ATP + H2O = ADP + phosphate + H(+). Functionally, the RuvA-RuvB-RuvC complex processes Holliday junction (HJ) DNA during genetic recombination and DNA repair, while the RuvA-RuvB complex plays an important role in the rescue of blocked DNA replication forks via replication fork reversal (RFR). RuvA specifically binds to HJ cruciform DNA, conferring on it an open structure. The RuvB hexamer acts as an ATP-dependent pump, pulling dsDNA into and through the RuvAB complex. RuvB forms 2 homohexamers on either side of HJ DNA bound by 1 or 2 RuvA tetramers; 4 subunits per hexamer contact DNA at a time. Coordinated motions by a converter formed by DNA-disengaged RuvB subunits stimulates ATP hydrolysis and nucleotide exchange. Immobilization of the converter enables RuvB to convert the ATP-contained energy into a lever motion, pulling 2 nucleotides of DNA out of the RuvA tetramer per ATP hydrolyzed, thus driving DNA branch migration. The RuvB motors rotate together with the DNA substrate, which together with the progressing nucleotide cycle form the mechanistic basis for DNA recombination by continuous HJ branch migration. Branch migration allows RuvC to scan DNA until it finds its consensus sequence, where it cleaves and resolves cruciform DNA. This is Holliday junction branch migration complex subunit RuvB from Orientia tsutsugamushi (strain Ikeda) (Rickettsia tsutsugamushi).